Reading from the N-terminus, the 179-residue chain is Bifunctional protein PyrR (179 aa).

Residues 39–40 (RR), 101–109 (DDVLFTGRT), Arg-134, and Val-158 contribute to the substrate site. Residues 97–109 (VILIDDVLFTGRT) carry the PRPP-binding motif.

It belongs to the purine/pyrimidine phosphoribosyltransferase family. PyrR subfamily.

The catalysed reaction is UMP + diphosphate = 5-phospho-alpha-D-ribose 1-diphosphate + uracil. Functionally, regulates the transcription of the pyrimidine nucleotide (pyr) operon in response to exogenous pyrimidines. Also displays a weak uracil phosphoribosyltransferase activity which is not physiologically significant. The polypeptide is Bifunctional protein PyrR (Haemophilus ducreyi (strain 35000HP / ATCC 700724)).